Here is a 340-residue protein sequence, read N- to C-terminus: MWKFLKEMPKVELHAHLNGSLNTNSLQDLAEKVYGNTSEEFSHLCARFVNFEKDSNLDKCFEKFAFVHELTSTAAGLQYATELVIRDFANDNIQYLELRTTPKANKNYLRRDYLRIVLDTIKRSRKKYPNILVKLLPSINRSEPVAVAEETVALALEFAKTDPDLVVGIDLSGIPTKGKFTDFCGALDLARREGLKLVIHCAEIDNPPEIKEMLSFGMSRCGHGTYLTEEDFAQMKAANIPIECCLTSNIKSGSVSSFEEHHLKRLMESDAPRVVCTDDSGVFDTSLTNEFLLVVETFNVTRDQCIDLTLEAVKHSFASEQERQQMALKVEHYVNSLQTD.

Zn(2+) contacts are provided by histidine 14 and histidine 16. Residues histidine 16, asparagine 18, histidine 68, 100–103, and glycine 173 contribute to the N(6)-methyl-AMP site; that span reads TTPK. Histidine 200 contacts Zn(2+). Residues glutamate 203, aspartate 278, and aspartate 279 each contribute to the N(6)-methyl-AMP site. Glutamate 203 functions as the Proton donor in the catalytic mechanism. Aspartate 278 serves as a coordination point for Zn(2+).

The protein belongs to the metallo-dependent hydrolases superfamily. Adenosine and AMP deaminases family. Monomer. It depends on Zn(2+) as a cofactor.

The enzyme catalyses N(6)-methyl-AMP + H2O + H(+) = IMP + methylamine. In terms of biological role, catalyzes the hydrolysis of the free cytosolic methylated adenosine nucleotide N(6)-methyl-AMP (N6-mAMP) to produce inositol monophosphate (IMP) and methylamine. Is required for the catabolism of cytosolic N6-mAMP, which is derived from the degradation of mRNA containing N6-methylated adenine (m6A). In Drosophila pseudoobscura pseudoobscura (Fruit fly), this protein is Adenosine deaminase-like protein.